The chain runs to 122 residues: Large ribosomal subunit protein uL14 (122 aa).

Belongs to the universal ribosomal protein uL14 family. In terms of assembly, part of the 50S ribosomal subunit. Forms a cluster with proteins L3 and L19. In the 70S ribosome, L14 and L19 interact and together make contacts with the 16S rRNA in bridges B5 and B8.

Its function is as follows. Binds to 23S rRNA. Forms part of two intersubunit bridges in the 70S ribosome. In Christiangramia forsetii (strain DSM 17595 / CGMCC 1.15422 / KT0803) (Gramella forsetii), this protein is Large ribosomal subunit protein uL14.